Reading from the N-terminus, the 354-residue chain is MTSSSSNRPFSHRSPNTFLTYPQCPEQPEIISQRIWDLCSHWTPLYIICAREAHRDGNQCLHALIQTEKPVRTTDSRFFDIDGFHPNIQSAISPNKVRDYITKEPLALFERGTFIPRKKSFLGNSSKGNSDKKPSKDEIMRDIISHATSKQEYLSMVQKSLPYDWSTKLQYFEYSANKLFPDIQEEFINPHPTSEPDLLCNESIKDWLQPNIYQADYGTRKRSLYIVGPTRTGKSTWARSLGRHNYWQNNVDWSSYNEDTIYNIVDDIPFKYCPCWKQLVGCQKEFVVNPKYGKKKKVQMKSKPTIILANSDEDWMKEMTPGQLEYFEANCMIYVMQPGEKWYSPPELPPTEEV.

In terms of domain architecture, CRESS-DNA virus Rep endonuclease spans 11–114; that stretch reads SHRSPNTFLT…PLALFERGTF (104 aa). An RCR-1 motif is present at residues 18–21; that stretch reads FLTY. 2 residues coordinate a divalent metal cation: Glu52 and His62. Positions 60-65 match the RCR-2 motif; it reads CLHALI. Catalysis depends on Tyr100, which acts as the For DNA cleavage activity. An RCR-3 motif is present at residues 100–103; it reads YITK. Glu104 provides a ligand contact to a divalent metal cation. Residues 175–187 form an oligomerization region; the sequence is SANKLFPDIQEEF. 228-235 provides a ligand contact to ATP; sequence GPTRTGKS. Residues 251–269 are transactivation; the sequence is VDWSSYNEDTIYNIVDDIP. The short motif at 291–302 is the Nuclear localization signal element; that stretch reads KYGKKKKVQMKS.

The protein belongs to the geminiviridae Rep protein family. Homooligomer. Rep binds to repeated DNA motifs (iterons). Forms the O-complex, which is a Rep-DNA complex involved in the initiation of RCR. Part of the C- and V-complexes which are RepA-Rep-DNA complexes involved in the c-sense and v-sense transcription. Mg(2+) serves as cofactor. Mn(2+) is required as a cofactor.

Its subcellular location is the host nucleus. Its function is as follows. Essential for the replication of viral ssDNA. The closed circular ssDNA genome is first converted to a superhelical dsDNA. Rep binds a specific region at the genome origin of replication. It introduces an endonucleolytic nick within the conserved sequence 5'-TAATATTAC-3' in the intergenic region of the genome present in all geminiviruses, thereby initiating the rolling circle replication (RCR). Following cleavage, binds covalently to the 5'-phosphate of DNA as a tyrosyl ester. The cleavage gives rise to a free 3'-OH that serves as a primer for the cellular DNA polymerase. The polymerase synthesizes the (+) strand DNA by rolling circle mechanism. After one round of replication, a Rep-catalyzed nucleotidyl transfer reaction releases a circular single-stranded virus genome, thereby terminating the replication. Displays origin-specific DNA cleavage, nucleotidyl transferase, ATPase and helicase activities. Acts as an inhibitor of C-sense gene transcription. The sequence is that of Replication-associated protein from Maize streak virus genotype C (isolate Set) (MSV).